A 239-amino-acid chain; its full sequence is Elongation factor Ts (239 aa).

The involved in Mg(2+) ion dislocation from EF-Tu stretch occupies residues 82 to 85 (TDFV). Residues 213-239 (AAQTKPKAEEKPAAKKATSKKKKGKKK) are disordered. Positions 229 to 239 (ATSKKKKGKKK) are enriched in basic residues.

The protein belongs to the EF-Ts family.

The protein resides in the cytoplasm. Associates with the EF-Tu.GDP complex and induces the exchange of GDP to GTP. It remains bound to the aminoacyl-tRNA.EF-Tu.GTP complex up to the GTP hydrolysis stage on the ribosome. This is Elongation factor Ts from Acaryochloris marina (strain MBIC 11017).